The sequence spans 156 residues: RNA pyrophosphohydrolase (156 aa).

Positions 6–148 (NYRPNVAAIV…KKNIYVKVIK (143 aa)) constitute a Nudix hydrolase domain. The Nudix box motif lies at 43 to 64 (GGIDKGESAKNALFRELKEEIG).

Belongs to the Nudix hydrolase family. RppH subfamily. A divalent metal cation serves as cofactor.

Accelerates the degradation of transcripts by removing pyrophosphate from the 5'-end of triphosphorylated RNA, leading to a more labile monophosphorylated state that can stimulate subsequent ribonuclease cleavage. The polypeptide is RNA pyrophosphohydrolase (Campylobacter jejuni subsp. doylei (strain ATCC BAA-1458 / RM4099 / 269.97)).